Here is a 266-residue protein sequence, read N- to C-terminus: Ribosomal RNA small subunit methyltransferase A (266 aa).

S-adenosyl-L-methionine contacts are provided by H13, L15, G40, E61, D85, and N104.

Belongs to the class I-like SAM-binding methyltransferase superfamily. rRNA adenine N(6)-methyltransferase family. RsmA subfamily.

It is found in the cytoplasm. The enzyme catalyses adenosine(1518)/adenosine(1519) in 16S rRNA + 4 S-adenosyl-L-methionine = N(6)-dimethyladenosine(1518)/N(6)-dimethyladenosine(1519) in 16S rRNA + 4 S-adenosyl-L-homocysteine + 4 H(+). Specifically dimethylates two adjacent adenosines (A1518 and A1519) in the loop of a conserved hairpin near the 3'-end of 16S rRNA in the 30S particle. May play a critical role in biogenesis of 30S subunits. This chain is Ribosomal RNA small subunit methyltransferase A, found in Parabacteroides distasonis (strain ATCC 8503 / DSM 20701 / CIP 104284 / JCM 5825 / NCTC 11152).